A 413-amino-acid polypeptide reads, in one-letter code: Argininosuccinate synthase (413 aa).

ATP-binding positions include 12–20 (AYSGGLDTS) and A39. L-citrulline is bound by residues Y92 and S97. G122 lines the ATP pocket. Residues T124, N128, and D129 each contribute to the L-aspartate site. N128 is a binding site for L-citrulline. L-citrulline is bound by residues R132, S189, S198, E274, and Y286.

The protein belongs to the argininosuccinate synthase family. Type 1 subfamily. Homotetramer.

It is found in the cytoplasm. It carries out the reaction L-citrulline + L-aspartate + ATP = 2-(N(omega)-L-arginino)succinate + AMP + diphosphate + H(+). The protein operates within amino-acid biosynthesis; L-arginine biosynthesis; L-arginine from L-ornithine and carbamoyl phosphate: step 2/3. This Aliarcobacter butzleri (strain RM4018) (Arcobacter butzleri) protein is Argininosuccinate synthase.